The sequence spans 324 residues: Membrane protein UL8 (324 aa).

Residues 36–138 are immunoglobulin V-like domain; sequence ILESIIYVSG…LWYNLTVKPK (103 aa). Residues 278–298 form a helical membrane-spanning segment; the sequence is THYSWMLIIAIILIIFIIICL.

The protein belongs to the RL11 family. Post-translationally, highly glycosylated.

The protein localises to the host cell membrane. Its function is as follows. Plays a role in the inhibition of pro-inflammatory cytokine production. This effect is mediated by the conserved Ig-like domain. This Homo sapiens (Human) protein is Membrane protein UL8 (UL8).